The chain runs to 222 residues: UPF0128 protein PF1488 (222 aa).

It belongs to the UPF0128 family.

In Pyrococcus furiosus (strain ATCC 43587 / DSM 3638 / JCM 8422 / Vc1), this protein is UPF0128 protein PF1488.